Reading from the N-terminus, the 420-residue chain is Putative sporulation-specific glycosylase YdhD (420 aa).

LysM domains are found at residues 2 to 45 and 48 to 92; these read FIHI…ALLI and YVYT…KITI. The region spanning 100-420 is the GH18 domain; that stretch reads AGTLSFYVLR…LRKFFTIRKV (321 aa). Residue Glu-212 is the Proton donor of the active site.

This sequence belongs to the glycosyl hydrolase 18 family. Chitinase class II subfamily.

The protein resides in the spore wall. The chain is Putative sporulation-specific glycosylase YdhD (ydhD) from Bacillus subtilis (strain 168).